Reading from the N-terminus, the 285-residue chain is Probable endonuclease 4 (285 aa).

Zn(2+) is bound by residues histidine 69, histidine 109, glutamate 145, aspartate 179, histidine 182, histidine 216, aspartate 229, histidine 231, and glutamate 261.

It belongs to the AP endonuclease 2 family. Requires Zn(2+) as cofactor.

It catalyses the reaction Endonucleolytic cleavage to 5'-phosphooligonucleotide end-products.. In terms of biological role, endonuclease IV plays a role in DNA repair. It cleaves phosphodiester bonds at apurinic or apyrimidinic (AP) sites, generating a 3'-hydroxyl group and a 5'-terminal sugar phosphate. In Shigella flexneri serotype 5b (strain 8401), this protein is Probable endonuclease 4.